Here is a 93-residue protein sequence, read N- to C-terminus: OMEGA-ectatommitoxin(02)-Rm1c (93 aa).

A signal peptide spans 1 to 30 (MKDSYISIVIAYLMVTFILVSSMPIEGEKG). Disulfide bonds link C39-C52, C47-C68, and C70-C79. Positions 43-80 (YENYCFNGKCVHVVAQDEPGKPCYSCICDEFYIGERCG) constitute an EGF-like domain.

This sequence belongs to the EGF domain peptide family. In terms of tissue distribution, expressed by the venom gland.

The protein localises to the secreted. In terms of biological role, ant peptide with probable defensive activity which acts as a potent agonist of the mammalian epidermal growth factor receptor (EGFR). Mimics, both structurally and functionally, vertebrate epidermal growth factor (EGF) peptide hormones. In vivo, intraplantar injection in mice causes long-lasting (several days) hypersensitivity of the injected paw to both mechanical and thermal stimuli. Its long-lasting effect is unusual for venom toxins whose effects are usually immediate. One possible explanation is that it would reduce the duration of a nest attack, discourage future attacks, or enhance the actions of subsequent exposure to other pain-inducing venom peptides. The protein is OMEGA-ectatommitoxin(02)-Rm1c of Rhytidoponera metallica (Australian green-headed ant).